The following is a 250-amino-acid chain: Putative apoptosis inhibitor ORF99 (250 aa).

The stretch at 13–78 (RVNSFGGWSK…KFSGDCLYLK (66 aa)) is one BIR repeat.

May act as an apoptosis inhibitor. In Ostreid herpesvirus 1 (isolate France) (OsHV-1), this protein is Putative apoptosis inhibitor ORF99.